A 147-amino-acid chain; its full sequence is MVAVGKTSAIAAGVCGALLLGYCIYFDRKRRSDPNFKNRLREKRRKQKIAKERAGQSRLPDLKDAEAVQKFFLEEIQLGEELLAQGDFEKGVDHLTNAIAICGQPQQLLQVLQQTLPPPVFQMLLTKLPTISQRIGNAQNLSEDDVE.

Residues 1-3 lie on the Mitochondrial intermembrane side of the membrane; that stretch reads MVA. A helical transmembrane segment spans residues 4 to 26; that stretch reads VGKTSAIAAGVCGALLLGYCIYF. Over 27–147 the chain is Cytoplasmic; sequence DRKRRSDPNF…AQNLSEDDVE (121 aa).

It belongs to the Tom20 family. As to quaternary structure, forms part of the preprotein translocase complex of the outer mitochondrial membrane (TOM complex). Interacts with tom22.

It localises to the mitochondrion outer membrane. Functionally, central component of the receptor complex responsible for the recognition and translocation of cytosolically synthesized mitochondrial preproteins. Together with tom22 functions as the transit peptide receptor at the surface of the mitochondrion outer membrane and facilitates the movement of preproteins into the tom40 translocation pore. The protein is Mitochondrial import receptor subunit TOM20 homolog (tomm20) of Xenopus laevis (African clawed frog).